The chain runs to 44 residues: Photosystem I reaction center subunit IX (44 aa).

The chain crosses the membrane as a helical span at residues 9–29 (WFRSAPVVATIWIVLTAGILV).

The protein belongs to the PsaJ family.

The protein localises to the cellular thylakoid membrane. Its function is as follows. May help in the organization of the PsaE and PsaF subunits. In Prochlorococcus marinus (strain MIT 9211), this protein is Photosystem I reaction center subunit IX.